A 217-amino-acid polypeptide reads, in one-letter code: Adenylate kinase (217 aa).

10–15 (GAGKGT) is an ATP binding site. Positions 30–59 (STGDMLRAAIREGTELGLKAKSVMESGGLV) are NMP. Residues Thr-31, Arg-36, 57–59 (GLV), 85–88 (GFPR), and Gln-92 each bind AMP. Residues 122–159 (GRRQHPASGRVYHVVYNPPKVEGKDDETGEDLVQRPDD) are LID. ATP is bound by residues Arg-123 and 132-133 (VY). Residues Arg-156 and Arg-167 each contribute to the AMP site. Arg-202 serves as a coordination point for ATP.

The protein belongs to the adenylate kinase family. As to quaternary structure, monomer.

The protein localises to the cytoplasm. It catalyses the reaction AMP + ATP = 2 ADP. Its pathway is purine metabolism; AMP biosynthesis via salvage pathway; AMP from ADP: step 1/1. Its function is as follows. Catalyzes the reversible transfer of the terminal phosphate group between ATP and AMP. Plays an important role in cellular energy homeostasis and in adenine nucleotide metabolism. This is Adenylate kinase from Acinetobacter baumannii (strain AB307-0294).